The chain runs to 349 residues: Phosphoribosylformylglycinamidine cyclo-ligase (349 aa).

It belongs to the AIR synthase family.

The protein localises to the cytoplasm. It carries out the reaction 2-formamido-N(1)-(5-O-phospho-beta-D-ribosyl)acetamidine + ATP = 5-amino-1-(5-phospho-beta-D-ribosyl)imidazole + ADP + phosphate + H(+). It participates in purine metabolism; IMP biosynthesis via de novo pathway; 5-amino-1-(5-phospho-D-ribosyl)imidazole from N(2)-formyl-N(1)-(5-phospho-D-ribosyl)glycinamide: step 2/2. This chain is Phosphoribosylformylglycinamidine cyclo-ligase, found in Listeria monocytogenes serovar 1/2a (strain ATCC BAA-679 / EGD-e).